A 333-amino-acid chain; its full sequence is L-lactate dehydrogenase B chain (333 aa).

Residues 29-57 and arginine 99 each bind NAD(+); that span reads GQVG…IEDK. Substrate contacts are provided by arginine 106, asparagine 138, and arginine 169. Asparagine 138 is an NAD(+) binding site. Histidine 193 functions as the Proton acceptor in the catalytic mechanism. Threonine 248 is a substrate binding site.

This sequence belongs to the LDH/MDH superfamily. LDH family. Homotetramer.

It is found in the cytoplasm. It catalyses the reaction (S)-lactate + NAD(+) = pyruvate + NADH + H(+). Its pathway is fermentation; pyruvate fermentation to lactate; (S)-lactate from pyruvate: step 1/1. In terms of biological role, interconverts simultaneously and stereospecifically pyruvate and lactate with concomitant interconversion of NADH and NAD(+). The polypeptide is L-lactate dehydrogenase B chain (ldhb) (Anguilla rostrata (American eel)).